Consider the following 230-residue polypeptide: Uracil-DNA glycosylase (230 aa).

Residue Asp70 is the Proton acceptor of the active site.

The protein belongs to the uracil-DNA glycosylase (UDG) superfamily. UNG family.

The protein localises to the cytoplasm. The enzyme catalyses Hydrolyzes single-stranded DNA or mismatched double-stranded DNA and polynucleotides, releasing free uracil.. In terms of biological role, excises uracil residues from the DNA which can arise as a result of misincorporation of dUMP residues by DNA polymerase or due to deamination of cytosine. The polypeptide is Uracil-DNA glycosylase (Campylobacter concisus (strain 13826)).